We begin with the raw amino-acid sequence, 385 residues long: S-adenosylmethionine synthase (385 aa).

An ATP-binding site is contributed by H15. D17 contacts Mg(2+). E43 contributes to the K(+) binding site. Residues E56 and Q99 each coordinate L-methionine. The flexible loop stretch occupies residues 99–109; sequence QSPDINQGVDR. Residues 164-166, 230-231, D239, 245-246, A262, and K266 contribute to the ATP site; these read DAK, RF, and RK. D239 is an L-methionine binding site. K270 is an L-methionine binding site.

This sequence belongs to the AdoMet synthase family. In terms of assembly, homotetramer; dimer of dimers. The cofactor is Mg(2+). Requires K(+) as cofactor.

It is found in the cytoplasm. It carries out the reaction L-methionine + ATP + H2O = S-adenosyl-L-methionine + phosphate + diphosphate. It functions in the pathway amino-acid biosynthesis; S-adenosyl-L-methionine biosynthesis; S-adenosyl-L-methionine from L-methionine: step 1/1. Its function is as follows. Catalyzes the formation of S-adenosylmethionine (AdoMet) from methionine and ATP. The overall synthetic reaction is composed of two sequential steps, AdoMet formation and the subsequent tripolyphosphate hydrolysis which occurs prior to release of AdoMet from the enzyme. This chain is S-adenosylmethionine synthase, found in Hamiltonella defensa subsp. Acyrthosiphon pisum (strain 5AT).